Consider the following 156-residue polypeptide: Ribosome maturation factor RimP (156 aa).

The protein belongs to the RimP family.

It localises to the cytoplasm. Its function is as follows. Required for maturation of 30S ribosomal subunits. The sequence is that of Ribosome maturation factor RimP from Oceanobacillus iheyensis (strain DSM 14371 / CIP 107618 / JCM 11309 / KCTC 3954 / HTE831).